The primary structure comprises 347 residues: Globoside alpha-1,3-N-acetylgalactosaminyltransferase 1 (347 aa).

Topologically, residues 1–5 are cytoplasmic; it reads MHRRR. The chain crosses the membrane as a helical; Signal-anchor for type II membrane protein span at residues 6 to 26; it reads LALGLGFCLLAGTSLSVLWVY. Over 27–347 the chain is Lumenal; the sequence is LENWLPVSYV…LDKDISCLRS (321 aa). Asn108 carries N-linked (GlcNAc...) asparagine glycosylation. Residues 116–121, 206–208, and 228–231 contribute to the substrate site; these read FAVGKY, DVD, and HPSY. Mn(2+) is bound by residues Asp206 and Asp208. The active-site Nucleophile is the Glu298.

Belongs to the glycosyltransferase 6 family. It depends on Mn(2+) as a cofactor. In terms of tissue distribution, widely expressed. Expressed at higher level in placenta, ovary and peripheral blood leukocyte, whereas it is weakly expressed in liver, thymus, and testis. Expressed in bone marrow erythroid cells.

It localises to the golgi apparatus membrane. It functions in the pathway protein modification; protein glycosylation. Has lost the ability to synthesize Forssman glycolipid antigen (FORS1/FG). Might have acquired an alternative function in glycosphingolipid metabolism, but it remains to be established. It appears to have drifted more slowly than confirmed pseudogenes in the glycosyltransferase 6 family, suggesting that it has remained under evolutionary pressure. This chain is Globoside alpha-1,3-N-acetylgalactosaminyltransferase 1, found in Homo sapiens (Human).